The primary structure comprises 269 residues: Nitrite transporter NirC (269 aa).

Residues 1-29 (MFTDTINKCAANAARIARLSANNPLGFWV) lie on the Cytoplasmic side of the membrane. The helical transmembrane segment at 30–46 (SSAMAGAYVGLGIILIF) threads the bilayer. Residues 47-58 (TLGNLLDPSVRP) are Extracellular-facing. Residues 59-75 (LVMGATFGIALTLVIIA) form a helical membrane-spanning segment. Residues 76-107 (GSELFTGHTMFLTLGVKAGTISHGQMWAILPQ) lie on the Cytoplasmic side of the membrane. The helical transmembrane segment at 108-125 (TWLGNLVGSVFVALLYSW) threads the bilayer. The Extracellular segment spans residues 126 to 153 (GGGSLLPVDTSIVHSVALAKTTAPATVL). A helical transmembrane segment spans residues 154–172 (FFKGALCNWLVCLAIWMAI). Topologically, residues 173-179 (RTEGTAK) are cytoplasmic. A helical transmembrane segment spans residues 180–195 (FLAIWWCLLAFIASGY). Residues 196–230 (EHSVANMTLFALSWFGHHSDAYTLAGIGHNLLWVT) lie on the Extracellular side of the membrane. Residues 231–250 (LGNTLSGVVFMGLGYWYATP) traverse the membrane as a helical segment. Residues 251–269 (KSERPAPAKINQPEAAANN) lie on the Cytoplasmic side of the membrane.

This sequence belongs to the FNT transporter (TC 1.A.16) family.

It localises to the cell inner membrane. In terms of biological role, catalyzes nitrite uptake and nitrite export across the cytoplasmic membrane. The polypeptide is Nitrite transporter NirC (nirC) (Salmonella typhimurium (strain LT2 / SGSC1412 / ATCC 700720)).